We begin with the raw amino-acid sequence, 373 residues long: uncharacterized protein (373 aa).

In terms of domain architecture, CP-type G spans 14–168 (KKIVNKIIDE…LMDTPGVLEM (155 aa)). 117 to 124 (GYPNVGKS) contacts GTP.

Belongs to the TRAFAC class YlqF/YawG GTPase family.

This is an uncharacterized protein from Methanocaldococcus jannaschii (strain ATCC 43067 / DSM 2661 / JAL-1 / JCM 10045 / NBRC 100440) (Methanococcus jannaschii).